Consider the following 976-residue polypeptide: Vacuolar membrane protease (976 aa).

The Cytoplasmic segment spans residues 1–51 (MPLSTGLTLSSLNVMEKADNHYNMMTKQPPALSPVDMVSSRRGFNPIAFTP). A helical membrane pass occupies residues 52-72 (WPVTILSSLVYLAFIIPIIVV). The Vacuolar segment spans residues 73-399 (HHLVPPAPKE…DNGNDGKLNN (327 aa)). N-linked (GlcNAc...) asparagine glycans are attached at residues N147 and N150. Zn(2+) is bound by residues H206 and D218. Residue E252 is the Proton acceptor of the active site. Zn(2+)-binding residues include E253, E278, and H351. Residues 400 to 420 (GAGTLGVWFDFYGSSFAVFEL) traverse the membrane as a helical segment. Topologically, residues 421–427 (NTLFGHS) are cytoplasmic. A helical transmembrane segment spans residues 428–448 (VALLVVAPLLLIATCVTLYTL). Residues 449-477 (DKMYMFSMYTYLSESGGQVSLYGLRGLFR) lie on the Vacuolar side of the membrane. The chain crosses the membrane as a helical span at residues 478–498 (FPLILGISTALTIGLAFLLMK). Residues 499–519 (ANPFIIYSSPYAVWNPSALHR) are Cytoplasmic-facing. The helical transmembrane segment at 520-540 (AYAFTWMFGMMWVLLVIATVY) threads the bilayer. At 541 to 550 (QKQHGIASSY) the chain is on the vacuolar side. Residues 551-571 (FIVFYFAGVSIATWISYLELF) form a helical membrane-spanning segment. Residues 572–675 (GLPTTQDYAR…HRLEQRWSIN (104 aa)) are Cytoplasmic-facing. The segment at 590–633 (TPSSDSRLLAPSADELPPSGSAAGHDFNPEDVEDEEPTESTSLL) is disordered. Positions 618–627 (PEDVEDEEPT) are enriched in acidic residues. A helical transmembrane segment spans residues 676–696 (LISSAWILQFLFVAPIVIILL). At 697 to 718 (GQLGLFLTSATYQIGADGGSQL) the chain is on the vacuolar side. The helical transmembrane segment at 719–739 (VIYVGIAVLSVLILLPLFPFI) threads the bilayer. Topologically, residues 740–745 (HRFTYH) are cytoplasmic. The helical transmembrane segment at 746–766 (IPTFLLFVLIGTLVYNLTAFP) threads the bilayer. The Vacuolar segment spans residues 767–976 (FSHSNRLKVA…LVEGSHSFKL (210 aa)). The N-linked (GlcNAc...) asparagine glycan is linked to N848.

The protein belongs to the peptidase M28 family. Requires Zn(2+) as cofactor.

The protein localises to the vacuole membrane. May be involved in vacuolar sorting and osmoregulation. This is Vacuolar membrane protease from Arthroderma otae (strain ATCC MYA-4605 / CBS 113480) (Microsporum canis).